A 648-amino-acid polypeptide reads, in one-letter code: Serine/threonine-protein kinase DCLK3 (648 aa).

Disordered regions lie at residues 86-127 (DDRA…HLGV) and 150-345 (QSLE…PRPM). 5 stretches are compositionally biased toward basic and acidic residues: residues 98 to 127 (GKWE…HLGV), 213 to 234 (ELRR…DQES), 255 to 266 (EGLREVKKDTRP), 277 to 303 (LREH…EKKP), and 312 to 338 (TLRD…ERPS). A Protein kinase domain is found at 356 to 613 (YETGRVIGDG…AHQVLQHPWI (258 aa)). Residues 362–370 (IGDGNFAVV) and Lys385 contribute to the ATP site. The Proton acceptor role is filled by Asp477. The interval 628-648 (VSPSSEGHFRSQHKRVVEQVS) is disordered.

The protein belongs to the protein kinase superfamily. CAMK Ser/Thr protein kinase family. CaMK subfamily.

The protein resides in the cytoplasm. It localises to the nucleus. The catalysed reaction is L-seryl-[protein] + ATP = O-phospho-L-seryl-[protein] + ADP + H(+). It carries out the reaction L-threonyl-[protein] + ATP = O-phospho-L-threonyl-[protein] + ADP + H(+). The polypeptide is Serine/threonine-protein kinase DCLK3 (DCLK3) (Homo sapiens (Human)).